The primary structure comprises 445 residues: Argininosuccinate synthase (445 aa).

Residues 18 to 26 (AFSGGLDTS) and A44 contribute to the ATP site. Position 100 (Y100) interacts with L-citrulline. ATP is bound by residues G130 and T132. L-aspartate is bound by residues T132, N136, and D137. N136 provides a ligand contact to L-citrulline. An ATP-binding site is contributed by D137. Positions 140 and 193 each coordinate L-citrulline. D195 contributes to the ATP binding site. Residues T202, E204, and E281 each coordinate L-citrulline.

Belongs to the argininosuccinate synthase family. Type 2 subfamily. In terms of assembly, homotetramer.

The protein localises to the cytoplasm. It carries out the reaction L-citrulline + L-aspartate + ATP = 2-(N(omega)-L-arginino)succinate + AMP + diphosphate + H(+). The protein operates within amino-acid biosynthesis; L-arginine biosynthesis; L-arginine from L-ornithine and carbamoyl phosphate: step 2/3. The sequence is that of Argininosuccinate synthase (argG) from Pasteurella multocida (strain Pm70).